The sequence spans 490 residues: Chromosomal replication initiator protein DnaA (490 aa).

The interval Met-1–Asp-75 is domain I, interacts with DnaA modulators. A domain II region spans residues Asp-75–Ser-145. Residues Pro-146–Gln-368 form a domain III, AAA+ region region. ATP is bound by residues Gly-192, Gly-194, Lys-195, and Thr-196. The domain IV, binds dsDNA stretch occupies residues Ser-369–Ala-490.

The protein belongs to the DnaA family. Oligomerizes as a right-handed, spiral filament on DNA at oriC.

The protein resides in the cytoplasm. In terms of biological role, plays an essential role in the initiation and regulation of chromosomal replication. ATP-DnaA binds to the origin of replication (oriC) to initiate formation of the DNA replication initiation complex once per cell cycle. Binds the DnaA box (a 9 base pair repeat at the origin) and separates the double-stranded (ds)DNA. Forms a right-handed helical filament on oriC DNA; dsDNA binds to the exterior of the filament while single-stranded (ss)DNA is stabiized in the filament's interior. The ATP-DnaA-oriC complex binds and stabilizes one strand of the AT-rich DNA unwinding element (DUE), permitting loading of DNA polymerase. After initiation quickly degrades to an ADP-DnaA complex that is not apt for DNA replication. Binds acidic phospholipids. The protein is Chromosomal replication initiator protein DnaA of Mesorhizobium japonicum (strain LMG 29417 / CECT 9101 / MAFF 303099) (Mesorhizobium loti (strain MAFF 303099)).